A 295-amino-acid polypeptide reads, in one-letter code: Zygote arrest protein 1.S (295 aa).

2 disordered regions span residues 80–115 (SVQC…TKTV) and 144–186 (EKGE…APAQ). Residues 144–176 (EKGEAVRSEGSEGGRQEGKQGDGEIKEQMKMDK) show a composition bias toward basic and acidic residues. A 3CxxC-type zinc finger spans residues 197 to 280 (KYGYYHCKDC…RQDLCGRCKG (84 aa)).

Belongs to the ZAR1 family. In terms of tissue distribution, ovary. Also expressed in lung and muscle.

It is found in the cytoplasm. The protein resides in the cytoplasmic ribonucleoprotein granule. MRNA-binding protein required for maternal mRNA storage, translation and degradation during oocyte maturation. Probably promotes formation of some phase-separated membraneless compartment that stores maternal mRNAs in oocytes: acts by undergoing liquid-liquid phase separation upon binding to maternal mRNAs. Binds to the 3'-UTR of maternal mRNAs in immature oocytes, inhibiting their translation. The polypeptide is Zygote arrest protein 1.S (zar1.S) (Xenopus laevis (African clawed frog)).